A 51-amino-acid chain; its full sequence is Ovomucoid (51 aa).

Residues 3 to 51 (IDCSGYPKPACTLEFFPLCGSDNQTYSNKCAFCNAAVEKNVTLNHIGEC) form the Kazal-like domain. Cystine bridges form between Cys5/Cys35, Cys13/Cys32, and Cys21/Cys51. Asn42 carries an N-linked (GlcNAc...) asparagine glycan.

It localises to the secreted. This chain is Ovomucoid, found in Eudromia elegans (Elegant crested-tinamou).